A 749-amino-acid polypeptide reads, in one-letter code: Cytosolic phospholipase A2 (749 aa).

Positions 1 to 124 (MASIDPYQHI…GEKKQVPFTF (124 aa)) constitute a C2 domain. The tract at residues 1-178 (MASIDPYQHI…LRKLLGPEKT (178 aa)) is phospholipid binding. Ca(2+)-binding residues include aspartate 40, threonine 41, aspartate 43, asparagine 65, aspartate 93, alanine 94, and asparagine 95. Residues 138 to 740 (VCSSTDLRFS…NDVESRKLHH (603 aa)) form the PLA2c domain. The active-site Nucleophile is the serine 229. A disordered region spans residues 428–452 (HILGNDSSDSDDEMQEPKGTENAKA). The span at 442-452 (QEPKGTENAKA) shows a compositional bias: basic and acidic residues. Aspartate 549 acts as the Proton acceptor in catalysis. The disordered stretch occupies residues 729–749 (SLNDVESRKLHHKDSQSKFQM). Residues 733–749 (VESRKLHHKDSQSKFQM) show a composition bias toward basic and acidic residues.

It localises to the cytoplasm. The protein resides in the cytoplasmic vesicle. It carries out the reaction a 1,2-diacyl-sn-glycero-3-phosphocholine + H2O = a 1-acyl-sn-glycero-3-phosphocholine + a fatty acid + H(+). It catalyses the reaction a 1-acyl-sn-glycero-3-phosphocholine + H2O = sn-glycerol 3-phosphocholine + a fatty acid + H(+). Stimulated by agonists such as ATP, EGF, thrombin and bradykinin as well as by cytosolic Ca(2+). Functionally, selectively hydrolyzes arachidonyl phospholipids in the sn-2 position releasing arachidonic acid. Together with its lysophospholipid activity, it is implicated in the initiation of the inflammatory response. In Xenopus laevis (African clawed frog), this protein is Cytosolic phospholipase A2 (pla2g4a).